Here is a 236-residue protein sequence, read N- to C-terminus: 3-oxoacyl-[acyl-carrier-protein] reductase (236 aa).

M1 carries the post-translational modification N-acetylmethionine. Residues 11–14 (SRGI) and 34–35 (RN) contribute to the NADP(+) site. N6-acetyllysine is present on K40. An NADP(+)-binding site is contributed by 83–85 (AAG). K96 is subject to N6-acetyllysine. S134 provides a ligand contact to substrate. NADP(+) is bound by residues Y147, K151, and 180 to 182 (IHT). Y147 (proton acceptor) is an active-site residue. At K194 the chain carries N6-acetyllysine.

This sequence belongs to the short-chain dehydrogenases/reductases (SDR) family. In terms of assembly, homotetramer (in vitro). Heterotetramer with HSD17B8; contains two molecules each of HSD17B8 and CBR4. Does not form homotetramers when HSD17B8 is coexpressed, only heterotetramers (in vitro).

The protein resides in the mitochondrion matrix. The enzyme catalyses a (3R)-hydroxyacyl-[ACP] + NADP(+) = a 3-oxoacyl-[ACP] + NADPH + H(+). It catalyses the reaction a quinone + NADPH + H(+) = a quinol + NADP(+). Its pathway is lipid metabolism; fatty acid biosynthesis. Functionally, component of the heterotetramer complex KAR (3-ketoacyl-[acyl carrier protein] reductase or 3-ketoacyl-[ACP] reductase) that forms part of the mitochondrial fatty acid synthase (mtFAS). Beta-subunit of the KAR heterotetramer complex, responsible for the 3-ketoacyl-ACP reductase activity of the mtFAS, reduces 3-oxoacyl-[ACP] to (3R)-hydroxyacyl-[ACP] in a NADPH-dependent manner with no chain length preference, thereby participating in mitochondrial fatty acid biosynthesis. The homotetramer has NADPH-dependent quinone reductase activity (in vitro), hence could play a role in protection against cytotoxicity of exogenous quinones. As a heterotetramer, it can also reduce 9,10-phenanthrenequinone, 1,4-benzoquinone and various other o-quinones and p-quinones (in vitro). This is 3-oxoacyl-[acyl-carrier-protein] reductase (Cbr4) from Rattus norvegicus (Rat).